Reading from the N-terminus, the 139-residue chain is D-ribose pyranase (139 aa).

The Proton donor role is filled by H20. Residues D28, H106, and 128–130 each bind substrate; that span reads FAN.

This sequence belongs to the RbsD / FucU family. RbsD subfamily. In terms of assembly, homodecamer.

It is found in the cytoplasm. The enzyme catalyses beta-D-ribopyranose = beta-D-ribofuranose. It functions in the pathway carbohydrate metabolism; D-ribose degradation; D-ribose 5-phosphate from beta-D-ribopyranose: step 1/2. Its function is as follows. Catalyzes the interconversion of beta-pyran and beta-furan forms of D-ribose. This chain is D-ribose pyranase, found in Klebsiella pneumoniae (strain 342).